The sequence spans 111 residues: Ribulose bisphosphate carboxylase small subunit (111 aa).

It belongs to the RuBisCO small chain family. Heterohexadecamer of 8 large and 8 small subunits. The CcmM short form purifies from carboxysomes in complex with both RuBisCO subunits; a second complex with full-length CcmM and RuBisCO also includes carbonic anhydrase (CA, ccaA). RuBisCO-CcmM complexes are probably associated with the carboxysome shell. Isolated reduced and oxidized SSUL1 binds holo-RuBisCO (RbcL(8)-RbcS(8)) but not either subunit octamer alone; RuBisCO has a higher affinity for reduced SSUL1.

The protein resides in the carboxysome. Functionally, ruBisCO catalyzes two reactions: the carboxylation of D-ribulose 1,5-bisphosphate, the primary event in carbon dioxide fixation, as well as the oxidative fragmentation of the pentose substrate in the photorespiration process. Both reactions occur simultaneously and in competition at the same active site. In terms of biological role, beta-carboxysome assembly initiates when soluble RuBisCO aggregates is condensed into a liquid matrix in a pre-carboxysome by the RbcS-like domains of probably both CcmM58 and CcmM35. CcmN interacts with the N-terminus of CcmM58, and then recruits the CcmK2 major shell protein via CcmN's encapsulation peptide. Shell formation requires CcmK proteins and CcmO. CcmL caps the otherwise elongated carboxysome. Once fully encapsulated carboxysomes are formed, they migrate within the cell probably via interactions with the cytoskeleton. The protein is Ribulose bisphosphate carboxylase small subunit of Synechococcus elongatus (strain ATCC 33912 / PCC 7942 / FACHB-805) (Anacystis nidulans R2).